The chain runs to 225 residues: C-type lectin domain-containing protein 91 (225 aa).

Residues 1–21 (MRSTYILIIVPLIIIGGGVVA) form the signal peptide. The C-type lectin domain maps to 85-215 (YSDSCYFIET…CTMAFKSICE (131 aa)). 2 disulfide bridges follow: cysteine 106/cysteine 214 and cysteine 185/cysteine 206. A glycan (N-linked (GlcNAc...) asparagine) is linked at asparagine 217.

Its subcellular location is the secreted. This is C-type lectin domain-containing protein 91 (clec-91) from Caenorhabditis elegans.